Reading from the N-terminus, the 161-residue chain is Nucleotide-binding protein PFLU_4927 (161 aa).

Belongs to the YajQ family.

Functionally, nucleotide-binding protein. The polypeptide is Nucleotide-binding protein PFLU_4927 (Pseudomonas fluorescens (strain SBW25)).